We begin with the raw amino-acid sequence, 92 residues long: Large ribosomal subunit protein bL25 (92 aa).

This sequence belongs to the bacterial ribosomal protein bL25 family. As to quaternary structure, part of the 50S ribosomal subunit; part of the 5S rRNA/L5/L18/L25 subcomplex. Contacts the 5S rRNA. Binds to the 5S rRNA independently of L5 and L18.

Its function is as follows. This is one of the proteins that binds to the 5S RNA in the ribosome where it forms part of the central protuberance. The chain is Large ribosomal subunit protein bL25 from Photobacterium damsela subsp. piscicida (Pasteurella piscicida).